The sequence spans 229 residues: Enolase-phosphatase E1 (229 aa).

Over residues 208–218 (DTQSTHRQVSS) the composition is skewed to polar residues. Residues 208 to 229 (DTQSTHRQVSSFDDIHPEQIPT) form a disordered region. Basic and acidic residues predominate over residues 220-229 (DDIHPEQIPT).

The protein belongs to the HAD-like hydrolase superfamily. MasA/MtnC family. Monomer. It depends on Mg(2+) as a cofactor.

The enzyme catalyses 5-methylsulfanyl-2,3-dioxopentyl phosphate + H2O = 1,2-dihydroxy-5-(methylsulfanyl)pent-1-en-3-one + phosphate. Its pathway is amino-acid biosynthesis; L-methionine biosynthesis via salvage pathway; L-methionine from S-methyl-5-thio-alpha-D-ribose 1-phosphate: step 3/6. The protein operates within amino-acid biosynthesis; L-methionine biosynthesis via salvage pathway; L-methionine from S-methyl-5-thio-alpha-D-ribose 1-phosphate: step 4/6. Its function is as follows. Bifunctional enzyme that catalyzes the enolization of 2,3-diketo-5-methylthiopentyl-1-phosphate (DK-MTP-1-P) into the intermediate 2-hydroxy-3-keto-5-methylthiopentenyl-1-phosphate (HK-MTPenyl-1-P), which is then dephosphorylated to form the acireductone 1,2-dihydroxy-3-keto-5-methylthiopentene (DHK-MTPene). The sequence is that of Enolase-phosphatase E1 from Cronobacter sakazakii (Enterobacter sakazakii).